Here is a 347-residue protein sequence, read N- to C-terminus: Mitochondrial glycine transporter (347 aa).

Solcar repeat units lie at residues 18-102, 138-222, and 247-331; these read SKPT…LRTA, LSHT…SKRS, and STAS…LIMW. 6 helical membrane-spanning segments follow: residues 24-49, 77-103, 144-169, 197-220, 251-277, and 306-324; these read FAAG…TRVQ, GTLP…RTAV, LITG…VRYE, GFGA…EQSK, INFI…KTRV, and GLGL…AWTV.

The protein belongs to the mitochondrial carrier (TC 2.A.29) family. SLC25A38 subfamily.

The protein resides in the mitochondrion inner membrane. The enzyme catalyses glycine(in) = glycine(out). Functionally, mitochondrial glycine transporter that imports glycine into the mitochondrial matrix. Plays an important role in providing glycine for the first enzymatic step in heme biosynthesis, the condensation of glycine with succinyl-CoA to produce 5-aminolevulinate (ALA) in the mitochondrial matrix. The sequence is that of Mitochondrial glycine transporter from Coccidioides immitis (strain RS) (Valley fever fungus).